The primary structure comprises 180 residues: Outer-membrane lipoprotein LolB (180 aa).

The N-terminal stretch at 1 to 16 (MIRRVLLLSLALLLAG) is a signal peptide. The N-palmitoyl cysteine moiety is linked to residue Cys17. The S-diacylglycerol cysteine moiety is linked to residue Cys17.

Belongs to the LolB family. As to quaternary structure, monomer.

It localises to the cell outer membrane. In terms of biological role, plays a critical role in the incorporation of lipoproteins in the outer membrane after they are released by the LolA protein. This chain is Outer-membrane lipoprotein LolB, found in Chromobacterium violaceum (strain ATCC 12472 / DSM 30191 / JCM 1249 / CCUG 213 / NBRC 12614 / NCIMB 9131 / NCTC 9757 / MK).